We begin with the raw amino-acid sequence, 175 residues long: Protein LHCP TRANSLOCATION DEFECT (175 aa).

Residues 1-68 (MASSSISFSC…WFKFGKNGVD (68 aa)) constitute a chloroplast transit peptide. The stretch at 117–149 (PVDILLMLAATEGDRPKIEELLKAGADYSVKDA) is one ANK repeat.

In terms of assembly, interacts with CAO/cpSRP43, but is not a component of the transit complex. Interacts with LHCP (via T14 domain), TIC40 and TIC110. In terms of tissue distribution, highly expressed in leaves and seedlings. Detected in roots, but not in germinating seeds.

Its subcellular location is the plastid. It is found in the chloroplast thylakoid membrane. It localises to the chloroplast envelope. The protein resides in the chloroplast stroma. Its function is as follows. Involved in the import of light-harvesting complex proteins (LHCP) and subsequent routing of these proteins to the chloroplast signal recognition particle (SRP) pathway. The chain is Protein LHCP TRANSLOCATION DEFECT (LTD) from Arabidopsis thaliana (Mouse-ear cress).